Here is a 307-residue protein sequence, read N- to C-terminus: Heme A synthase (307 aa).

Residues Met-1–Arg-6 are Cytoplasmic-facing. The chain crosses the membrane as a helical span at residues Leu-7 to Thr-27. The Extracellular segment spans residues Lys-28 to Gly-65. A disulfide bond links Cys-35 and Cys-42. Residue Glu-57 is part of the active site. Residue His-60 coordinates heme o. The chain crosses the membrane as a helical span at residues Val-66 to Phe-86. Residues Arg-87–Leu-92 lie on the Cytoplasmic side of the membrane. Residues Val-93–Phe-113 form a helical membrane-spanning segment. Over Gly-114–Ala-121 the chain is Extracellular. Residues Leu-122–Phe-142 traverse the membrane as a helical segment. His-123 contributes to the heme o binding site. Topologically, residues Glu-143–Met-161 are cytoplasmic. The helical transmembrane segment at Gln-162–Val-182 threads the bilayer. At Arg-183–Arg-216 the chain is on the extracellular side. Cys-191 and Cys-197 are oxidised to a cystine. His-215 serves as a coordination point for heme b. The helical transmembrane segment at Ala-217–Tyr-237 threads the bilayer. Over Lys-238 to Gln-242 the chain is Cytoplasmic. A helical transmembrane segment spans residues Leu-243–Met-263. Over Ser-264–Ala-274 the chain is Extracellular. A helical membrane pass occupies residues Leu-275–Ile-295. His-277 contributes to the heme b binding site. Residues Ala-296–Lys-307 are Cytoplasmic-facing.

It belongs to the COX15/CtaA family. Type 1 subfamily. As to quaternary structure, interacts with CtaB. The cofactor is heme b.

The protein resides in the cell membrane. It carries out the reaction Fe(II)-heme o + 2 A + H2O = Fe(II)-heme a + 2 AH2. It functions in the pathway porphyrin-containing compound metabolism; heme A biosynthesis; heme A from heme O: step 1/1. Functionally, catalyzes the conversion of heme O to heme A by two successive hydroxylations of the methyl group at C8. The first hydroxylation forms heme I, the second hydroxylation results in an unstable dihydroxymethyl group, which spontaneously dehydrates, resulting in the formyl group of heme A. This is Heme A synthase from Bacillus pumilus (strain SAFR-032).